We begin with the raw amino-acid sequence, 766 residues long: Hypoxia-inducible factor 1-alpha (766 aa).

The interval 1–26 (MDTGVVPEKKSRVSSDRRKEKSRDAA) is disordered. Residues 7–26 (PEKKSRVSSDRRKEKSRDAA) are compositionally biased toward basic and acidic residues. The bHLH domain occupies 17 to 70 (RRKEKSRDAARCRRGKESEVFYELAQELPLPHSVTSNLDKASIMRLAISYLHMR). 2 consecutive PAS domains span residues 82 to 159 (EERE…TSKK) and 230 to 300 (PHPS…FAKG). The 44-residue stretch at 304–347 (TGQYRMLAKRGGFVWVETQATVIYNNKNSQPQCVVCVNYVLSGI) folds into the PAC domain. The tract at residues 361 to 383 (DMRPVKKELEEEESSEPEVSPVL) is disordered. Proline 426 bears the 4-hydroxyproline mark. Residues 475 to 509 (DQHLVPNTSVDTTEVSTGPDSSSTPGSHSFTEPDS) are disordered. The span at 479–489 (VPNTSVDTTEV) shows a compositional bias: polar residues. Residues 490-503 (STGPDSSSTPGSHS) show a composition bias toward low complexity. A 4-hydroxyproline modification is found at proline 559. A Nuclear localization signal motif is present at residues 718–721 (LLGI). Asparagine 743 is subject to (3S)-3-hydroxyasparagine.

In terms of assembly, efficient DNA binding requires heterodimerization of an alpha and a beta/ARNT subunit. In terms of processing, in normoxia, is hydroxylated on Pro-426 and Pro-559. The hydroxylated prolines promote interaction with VHL, initiating rapid ubiquitination and subsequent proteasomal degradation. Under hypoxia, proline hydroxylation is impaired and ubiquitination is attenuated, resulting in stabilization. Post-translationally, in normoxia, is hydroxylated on Asn-743, thus abrogating interaction with CREBBP and EP300 and preventing transcriptional activation. The iron and 2-oxoglutarate dependent 3-hydroxylation of asparagine is (S) stereospecific within HIF CTAD domains.

The protein resides in the cytoplasm. It localises to the nucleus. The protein localises to the nucleus speckle. With respect to regulation, induced by reactive oxygen species (ROS). Functionally, functions as a master transcriptional regulator of the adaptive response to hypoxia. Under hypoxic conditions, activates the transcription of over 40 genes, including erythropoietin, glucose transporters, glycolytic enzymes, vascular endothelial growth factor, HILPDA, and other genes whose protein products increase oxygen delivery or facilitate metabolic adaptation to hypoxia. Plays an essential role in embryonic vascularization, tumor angiogenesis and pathophysiology of ischemic disease. This is Hypoxia-inducible factor 1-alpha (hif1a) from Oncorhynchus mykiss (Rainbow trout).